Reading from the N-terminus, the 269-residue chain is 1,6-dihydroxycyclohexa-2,4-diene-1-carboxylate dehydrogenase (269 aa).

Position 11–35 (11–35) interacts with NAD(+); the sequence is VITGAAQGIGRRVAERMAAEGGRLL. Ser142 is a substrate binding site. Tyr153 acts as the Proton acceptor in catalysis.

It belongs to the short-chain dehydrogenases/reductases (SDR) family. In terms of assembly, homodimer.

It catalyses the reaction (1R,6S)-1,6-dihydroxycyclohexa-2,4-diene-1-carboxylate + NAD(+) = catechol + CO2 + NADH. Its pathway is aromatic compound metabolism; benzoate degradation via hydroxylation; catechol from benzoate: step 2/2. Degradation of 2-hydro-1,2-dihydroxy benzoate (DHB) to catechol. In Pseudomonas putida (Arthrobacter siderocapsulatus), this protein is 1,6-dihydroxycyclohexa-2,4-diene-1-carboxylate dehydrogenase (xylL).